The following is a 225-amino-acid chain: tRNA (guanine-N(1)-)-methyltransferase (225 aa).

S-adenosyl-L-methionine is bound by residues Gly-112 and 132 to 137 (IGDYVL).

This sequence belongs to the RNA methyltransferase TrmD family. Homodimer.

The protein resides in the cytoplasm. The enzyme catalyses guanosine(37) in tRNA + S-adenosyl-L-methionine = N(1)-methylguanosine(37) in tRNA + S-adenosyl-L-homocysteine + H(+). Specifically methylates guanosine-37 in various tRNAs. The polypeptide is tRNA (guanine-N(1)-)-methyltransferase (Flavobacterium psychrophilum (strain ATCC 49511 / DSM 21280 / CIP 103535 / JIP02/86)).